Consider the following 352-residue polypeptide: tRNA pseudouridine synthase D (352 aa).

Catalysis depends on D81, which acts as the Nucleophile. The TRUD domain maps to 157–303 (GIPNYFGAQR…MEHERRILRL (147 aa)).

This sequence belongs to the pseudouridine synthase TruD family.

It catalyses the reaction uridine(13) in tRNA = pseudouridine(13) in tRNA. Its function is as follows. Responsible for synthesis of pseudouridine from uracil-13 in transfer RNAs. In Pseudomonas syringae pv. syringae (strain B728a), this protein is tRNA pseudouridine synthase D.